We begin with the raw amino-acid sequence, 1122 residues long: Phytochrome A (1122 aa).

Residues 1-11 (MSGSRPTQSSE) show a composition bias toward polar residues. The disordered stretch occupies residues 1–21 (MSGSRPTQSSEGSRRSRHSAR). The GAF domain maps to 218–402 (SMERLCDTMV…VFAIHVNKEV (185 aa)). Cys-323 lines the phytochromobilin pocket. The region spanning 618 to 688 (VTSEMVRLIE…RMLENALEGT (71 aa)) is the PAS 1 domain. The PAC domain occupies 695–747 (FEIKTHLSRADAGPISLVVNACASRDLHENVVGVCFVAHDLTGQKTVMDKFTR). The region spanning 748–822 (IEGDYKAIIQ…KNQEAFVNLG (75 aa)) is the PAS 2 domain. In terms of domain architecture, Histidine kinase spans 902–1119 (YIKRQIRNPL…SFIITAELAA (218 aa)).

This sequence belongs to the phytochrome family. In terms of assembly, homodimer. Interacts with NDPK2 and PKS4. Stabilized by interactions with PAPP5 and FYPP3 which are enhanced in the phosphorylated Pfr form. Interacts with COP1/SPA1 complex. Binds, via its photosensory domain, to PTAC12/HMR when photoactivated; this interaction stimulates its localization to photobodies. Interacts with FHY1, FHL and FHY3, especially upon far-red (FR) light illumination; when underphosphorylated. Forms PHYA/FHY1/HFR1 complex. Binds to PIF3/PAP3. Phosphorylated. Post-translationally, contains one covalently linked phytochromobilin chromophore. Expressed in fruits, flowers, leaves, stems, seedlings and roots.

The protein resides in the cytoplasm. Its subcellular location is the nucleus. It is found in the nucleoplasm. It localises to the nucleus speckle. In terms of biological role, regulatory photoreceptor which exists in two forms that are reversibly interconvertible by light: the Pr form that absorbs maximally in the red region of the spectrum and the Pfr form that absorbs maximally in the far-red region. Photoconversion of Pr to Pfr induces an array of morphogenetic responses, whereas reconversion of Pfr to Pr cancels the induction of those responses. Pfr controls the expression of a number of nuclear genes including those encoding the small subunit of ribulose-bisphosphate carboxylase, chlorophyll A/B binding protein, protochlorophyllide reductase, rRNA, etc. It also controls the expression of its own gene(s) in a negative feedback fashion. Involved in the flowering time regulation. Can phosphorylate FHY1 and, possibly, FHL, in red light conditions; this inactivates their co-shuttling to the nucleus. Regulates phototropic responses both in the nucleus (e.g. hypocotyl elongation and cotyledon opening under high-irradiance conditions and seed germination under very-low-fluence conditions) and in the cytoplasm (e.g. negative gravitropism in blue light and red-enhanced phototropism). Promotes seed germination, suppression of hypocotyl elongation, and randomization of hypocotyl growth orientation in far-red light; these responses to far-red light are repressed by UNE10/PIF8. Stabilizes UNE10/PIF8 but sequesters PIF3/PAP3 from its target genes promoters in far-red light. The chain is Phytochrome A from Arabidopsis thaliana (Mouse-ear cress).